We begin with the raw amino-acid sequence, 454 residues long: Bifunctional protein GlmU (454 aa).

Positions 1–228 are pyrophosphorylase; that stretch reads MSLKVIILAA…EMEVLGVNNK (228 aa). UDP-N-acetyl-alpha-D-glucosamine contacts are provided by residues 8 to 11, K22, Q73, 78 to 79, 100 to 102, G138, E153, N168, and N226; these read LAAG, GT, and YGD. A Mg(2+)-binding site is contributed by D102. A Mg(2+)-binding site is contributed by N226. A linker region spans residues 229–249; the sequence is SQLQSLERQYQAQLAEELMEQ. The interval 250–454 is N-acetyltransferase; the sequence is GVTVLDASRI…IKGWQKPTKN (205 aa). UDP-N-acetyl-alpha-D-glucosamine is bound by residues R332 and K350. Catalysis depends on H362, which acts as the Proton acceptor. UDP-N-acetyl-alpha-D-glucosamine contacts are provided by Y365 and N376. Acetyl-CoA contacts are provided by residues A379, 385–386, S404, A422, and R439; that span reads NY.

This sequence in the N-terminal section; belongs to the N-acetylglucosamine-1-phosphate uridyltransferase family. It in the C-terminal section; belongs to the transferase hexapeptide repeat family. As to quaternary structure, homotrimer. Mg(2+) is required as a cofactor.

It localises to the cytoplasm. The enzyme catalyses alpha-D-glucosamine 1-phosphate + acetyl-CoA = N-acetyl-alpha-D-glucosamine 1-phosphate + CoA + H(+). The catalysed reaction is N-acetyl-alpha-D-glucosamine 1-phosphate + UTP + H(+) = UDP-N-acetyl-alpha-D-glucosamine + diphosphate. The protein operates within nucleotide-sugar biosynthesis; UDP-N-acetyl-alpha-D-glucosamine biosynthesis; N-acetyl-alpha-D-glucosamine 1-phosphate from alpha-D-glucosamine 6-phosphate (route II): step 2/2. It participates in nucleotide-sugar biosynthesis; UDP-N-acetyl-alpha-D-glucosamine biosynthesis; UDP-N-acetyl-alpha-D-glucosamine from N-acetyl-alpha-D-glucosamine 1-phosphate: step 1/1. Its pathway is bacterial outer membrane biogenesis; LPS lipid A biosynthesis. Its function is as follows. Catalyzes the last two sequential reactions in the de novo biosynthetic pathway for UDP-N-acetylglucosamine (UDP-GlcNAc). The C-terminal domain catalyzes the transfer of acetyl group from acetyl coenzyme A to glucosamine-1-phosphate (GlcN-1-P) to produce N-acetylglucosamine-1-phosphate (GlcNAc-1-P), which is converted into UDP-GlcNAc by the transfer of uridine 5-monophosphate (from uridine 5-triphosphate), a reaction catalyzed by the N-terminal domain. This Hydrogenovibrio crunogenus (strain DSM 25203 / XCL-2) (Thiomicrospira crunogena) protein is Bifunctional protein GlmU.